Consider the following 780-residue polypeptide: Pendrin (780 aa).

Residues 1-87 lie on the Cytoplasmic side of the membrane; that stretch reads MAARDRRSEP…YRVKEWLLSD (87 aa). A helical transmembrane segment spans residues 88–108; that stretch reads IISGVSTGLVGTLQGMAYALL. Residue Ala109 is a topological domain, extracellular. The chain crosses the membrane as a helical span at residues 110-130; that stretch reads AVPVQYGLYSAFFPILTYFVF. Over 131–135 the chain is Cytoplasmic; sequence GTSRH. A helical membrane pass occupies residues 136–156; the sequence is ISVGPFPVVSLMVGSVVLSMA. The Extracellular segment spans residues 157 to 191; the sequence is PDDHFLVPSGNGSTLNTTTLDTGTRDAARVLLAST. A helical transmembrane segment spans residues 192–212; it reads LTLLVGIIQLVFGGLQIGFIV. Over 213–218 the chain is Cytoplasmic; the sequence is RYLADP. A helical membrane pass occupies residues 219–239; that stretch reads LVGGFTTAAAFQVLVSQLKIV. At 240 to 263 the chain is on the extracellular side; sequence LNVSTKNYNGVLSIIYTLIEIFQN. Residues 264–284 form a helical membrane-spanning segment; that stretch reads IGDTNIADFIAGLLTIIVCMA. Topologically, residues 285–295 are cytoplasmic; it reads VKELNDRFKHK. The chain crosses the membrane as a helical span at residues 296–316; the sequence is IPVPIPIEVIVTIIATAISYG. Residues 317–344 are Extracellular-facing; it reads ANLEANYNAGIVKSIPSGFLPPVLPSVG. Residues 345–365 form a helical membrane-spanning segment; it reads LFSDMLAASFSIAVVAYAIAV. At 366–384 the chain is on the cytoplasmic side; it reads SVGKVYATKHDYIIDGNQE. Residues 385–405 traverse the membrane as a helical segment; sequence FIAFGISNVFSGFFSCFVATT. Residues 406–421 are Extracellular-facing; that stretch reads ALSRTAVQESTGGKTQ. A helical transmembrane segment spans residues 422-442; that stretch reads VAGLISAVIVMVAIVALGKLL. Topologically, residues 443–448 are cytoplasmic; sequence EPLQKS. The helical transmembrane segment at 449–469 threads the bilayer; it reads VLAAVVIANLKGMFMQVCDVP. Residues 470–486 are Extracellular-facing; the sequence is RLWKQNKTDAVIWVFTC. Residues 487 to 507 form a helical membrane-spanning segment; that stretch reads IMSIILGLDLGLLAGLLFGLL. Residues 508 to 780 lie on the Cytoplasmic side of the membrane; that stretch reads TVVLRVQFPS…QDEAMRRLAS (273 aa). Residues 535 to 729 enclose the STAS domain; the sequence is HYKNLEEPEG…LTVHDAILYL (195 aa).

It belongs to the SLC26A/SulP transporter (TC 2.A.53) family. In terms of tissue distribution, highly expressed in the kidney (at protein level).

Its subcellular location is the cell membrane. It localises to the apical cell membrane. The catalysed reaction is chloride(in) = chloride(out). It carries out the reaction iodide(out) = iodide(in). The enzyme catalyses hydrogencarbonate(in) + chloride(out) = hydrogencarbonate(out) + chloride(in). It catalyses the reaction iodide(in) + hydrogencarbonate(out) = iodide(out) + hydrogencarbonate(in). The catalysed reaction is iodide(in) + chloride(out) = iodide(out) + chloride(in). It carries out the reaction formate(in) + chloride(out) = formate(out) + chloride(in). Its function is as follows. Sodium-independent transporter of chloride and iodide. Mediates electroneutral chloride-bicarbonate and chloride-formate exchange with 1:1 stoichiometry. Mediates electroneutral iodide-chloride and iodide-bicarbonate exchange. This is Pendrin (Slc26a4) from Rattus norvegicus (Rat).